A 122-amino-acid polypeptide reads, in one-letter code: Large ribosomal subunit protein uL14 (122 aa).

It belongs to the universal ribosomal protein uL14 family. In terms of assembly, part of the 50S ribosomal subunit. Forms a cluster with proteins L3 and L19. In the 70S ribosome, L14 and L19 interact and together make contacts with the 16S rRNA in bridges B5 and B8.

In terms of biological role, binds to 23S rRNA. Forms part of two intersubunit bridges in the 70S ribosome. In Acaryochloris marina (strain MBIC 11017), this protein is Large ribosomal subunit protein uL14.